A 283-amino-acid polypeptide reads, in one-letter code: MMGGKAALLLALVAVTLAVVEIQADAGYGYGGGYPTPTPKPPAKGPKPEKPPTKGHGHKPEKPPKEHKPTPPTYTPSPKPTPPPATPKPTPPTYTPSPKPKSPVYPPPPKASTPPTYTPSPKPPATKPPTYPTPKPPATKPPTPPVYTPSPKPPVTKPPTPKPTPPVYTPNPKPPVTKPPTHTPSPKPPTSKPTPPVYTPSPKPPKPSPPTYTPTPKPPATKPPTSTPTHPKPTPHTPYPQAHPPTYKPAPKPSPPAPTPPTYTPPVSHTPSSPPPPPPPPYY.

Positions 1 to 24 (MMGGKAALLLALVAVTLAVVEIQA) are cleaved as a signal peptide. The interval 27–283 (GYGYGGGYPT…PPPPPPPPYY (257 aa)) is disordered. The span at 36–45 (TPTPKPPAKG) shows a compositional bias: pro residues. Residues 46–69 (PKPEKPPTKGHGHKPEKPPKEHKP) show a composition bias toward basic and acidic residues. Pro residues-rich tracts occupy residues 70–264 (TPPT…PTYT) and 272–283 (SSPPPPPPPPYY).

In terms of processing, hydroxylated on proline residues in the S-P-P-P-P repeat. O-glycosylated on hydroxyprolines.

It localises to the secreted. The protein localises to the primary cell wall. Its function is as follows. Structural component in primary cell wall. This is Extensin (HRGP) from Sorghum bicolor (Sorghum).